Consider the following 193-residue polypeptide: GTP cyclohydrolase-2 (193 aa).

45-49 (RIHSE) contributes to the GTP binding site. Residues cysteine 50, cysteine 61, and cysteine 63 each contribute to the Zn(2+) site. GTP contacts are provided by residues glutamine 66, 87-89 (EGR), and threonine 109. Aspartate 121 (proton acceptor) is an active-site residue. The active-site Nucleophile is the arginine 123. The GTP site is built by threonine 144 and lysine 149.

It belongs to the GTP cyclohydrolase II family. Zn(2+) is required as a cofactor.

The catalysed reaction is GTP + 4 H2O = 2,5-diamino-6-hydroxy-4-(5-phosphoribosylamino)-pyrimidine + formate + 2 phosphate + 3 H(+). Its pathway is cofactor biosynthesis; riboflavin biosynthesis; 5-amino-6-(D-ribitylamino)uracil from GTP: step 1/4. Functionally, catalyzes the conversion of GTP to 2,5-diamino-6-ribosylamino-4(3H)-pyrimidinone 5'-phosphate (DARP), formate and pyrophosphate. This chain is GTP cyclohydrolase-2, found in Campylobacter hominis (strain ATCC BAA-381 / DSM 21671 / CCUG 45161 / LMG 19568 / NCTC 13146 / CH001A).